A 275-amino-acid polypeptide reads, in one-letter code: Dermonecrotic toxin SpaSicTox-betaIIA3 (275 aa).

H5 is an active-site residue. E25 and D27 together coordinate Mg(2+). H41 functions as the Nucleophile in the catalytic mechanism. 2 cysteine pairs are disulfide-bonded: C45–C51 and C47–C190. D85 contacts Mg(2+).

It belongs to the arthropod phospholipase D family. Class II subfamily. Mg(2+) serves as cofactor. In terms of tissue distribution, expressed by the venom gland.

It is found in the secreted. The enzyme catalyses an N-(acyl)-sphingosylphosphocholine = an N-(acyl)-sphingosyl-1,3-cyclic phosphate + choline. It carries out the reaction an N-(acyl)-sphingosylphosphoethanolamine = an N-(acyl)-sphingosyl-1,3-cyclic phosphate + ethanolamine. It catalyses the reaction a 1-acyl-sn-glycero-3-phosphocholine = a 1-acyl-sn-glycero-2,3-cyclic phosphate + choline. The catalysed reaction is a 1-acyl-sn-glycero-3-phosphoethanolamine = a 1-acyl-sn-glycero-2,3-cyclic phosphate + ethanolamine. Functionally, dermonecrotic toxins cleave the phosphodiester linkage between the phosphate and headgroup of certain phospholipids (sphingolipid and lysolipid substrates), forming an alcohol (often choline) and a cyclic phosphate. This toxin acts on sphingomyelin (SM). It may also act on ceramide phosphoethanolamine (CPE), lysophosphatidylcholine (LPC) and lysophosphatidylethanolamine (LPE), but not on lysophosphatidylserine (LPS), and lysophosphatidylglycerol (LPG). It acts by transphosphatidylation, releasing exclusively cyclic phosphate products as second products. Induces dermonecrosis, hemolysis, increased vascular permeability, edema, inflammatory response, and platelet aggregation. This chain is Dermonecrotic toxin SpaSicTox-betaIIA3, found in Sicarius patagonicus (Six-eyed sand spider).